A 239-amino-acid chain; its full sequence is MSLMKEMLSAGVHFGHKKAFWNPQMKEYIFGINHGVHIINLEKTVPLFQDAVNFVGKTVANGGKILFVGTKRQAQDIVEAEAKRCGMPFVSHRWLGGMLTNYKTVRQSIKRLAQLEKMREDGTLESLTKKEMLQNIRTIEKLEKVLGGIKEMGGLPDAIVVIDSNKEHIAIQEAQKLGIKVVAIVDTNSNPEGIDYIIPGNDDAVKSISFYMKKFADAVIDAQGLDRAVEAKADEAVQA.

Belongs to the universal ribosomal protein uS2 family.

This Francisella tularensis subsp. novicida (strain U112) protein is Small ribosomal subunit protein uS2.